The following is a 556-amino-acid chain: Vetispiradiene synthase 1 (556 aa).

Positions 309, 313, 452, 456, and 460 each coordinate Mg(2+). A DDXXD motif motif is present at residues D309–D313.

Belongs to the terpene synthase family. Tpsa subfamily. Mg(2+) serves as cofactor.

Its subcellular location is the cytoplasm. It catalyses the reaction (2E,6E)-farnesyl diphosphate = (-)-vetispiradiene + diphosphate. It functions in the pathway secondary metabolite biosynthesis; terpenoid biosynthesis. In terms of biological role, sesquiterpene synthase that catalyzes the formation of vetispiradiene from trans,trans-farnesyl diphosphate. The initial internal cyclization produces the monocyclic intermediate germacrene A. The protein is Vetispiradiene synthase 1 (PVS1) of Solanum tuberosum (Potato).